A 415-amino-acid polypeptide reads, in one-letter code: Exodeoxyribonuclease 7 large subunit (415 aa).

It belongs to the XseA family. In terms of assembly, heterooligomer composed of large and small subunits.

The protein resides in the cytoplasm. The enzyme catalyses Exonucleolytic cleavage in either 5'- to 3'- or 3'- to 5'-direction to yield nucleoside 5'-phosphates.. Bidirectionally degrades single-stranded DNA into large acid-insoluble oligonucleotides, which are then degraded further into small acid-soluble oligonucleotides. This chain is Exodeoxyribonuclease 7 large subunit, found in Mycobacterium bovis (strain ATCC BAA-935 / AF2122/97).